The sequence spans 367 residues: 2-aminoethylphosphonate--pyruvate transaminase (367 aa).

Lys194 bears the N6-(pyridoxal phosphate)lysine mark.

This sequence belongs to the class-V pyridoxal-phosphate-dependent aminotransferase family. PhnW subfamily. As to quaternary structure, homodimer. Requires pyridoxal 5'-phosphate as cofactor.

The enzyme catalyses (2-aminoethyl)phosphonate + pyruvate = phosphonoacetaldehyde + L-alanine. Its function is as follows. Involved in phosphonate degradation. The protein is 2-aminoethylphosphonate--pyruvate transaminase of Klebsiella pneumoniae subsp. pneumoniae (strain ATCC 700721 / MGH 78578).